Consider the following 308-residue polypeptide: MKSALLLLSYGSPERIEDLDEYLKNIFNGKPVPESVREENLRKYEMFGGRSPSNRIIESIARKLHEKIGDDMDVILAYKHWNPSIEEAVKGLGSYDNIVAIPLFSFYSQNVKDSYLNPLESALRRYGFSPRLEFVNGLANSDLFLPMWANIISEDASEDSFYLFDAHSLPAPDREEDYLFWLRYSTYKISQILGLSRSDFGFQGGHLGWLGPSIYDVLNRIDASKITVIPISFLYDHLEILYDLDYEFRKAVEAKGMHYRRVRMPNDSAMMVNMIERAARSAITHLSGEKINGSIIGQPRIADTDNGR.

Residues histidine 167 and glutamate 239 each coordinate Fe cation.

It belongs to the ferrochelatase family.

Its subcellular location is the cytoplasm. The catalysed reaction is heme b + 2 H(+) = protoporphyrin IX + Fe(2+). It participates in porphyrin-containing compound metabolism; protoheme biosynthesis; protoheme from protoporphyrin-IX: step 1/1. In terms of biological role, catalyzes the ferrous insertion into protoporphyrin IX. The sequence is that of Ferrochelatase from Thermoplasma acidophilum (strain ATCC 25905 / DSM 1728 / JCM 9062 / NBRC 15155 / AMRC-C165).